Reading from the N-terminus, the 515-residue chain is MTDRVIIFDTTLRDGEQALKASLTVKEKLQIALALERLGVDVMEVGFPVSSQGDFESVQTIARHIKNARVAALSRAVDKDIDAAYQALKVAEAFRIHTFIASSALHVEAKLKRSFDDVVGMAVAAVKRARNYTDDVEFSCEDAGRTGIDNICRIVEAAINAGATTVNIPDTVGFCLPNEYGNIIAQVRNRVPNIDKAVISVHCHNDLGMATANSLTAVQNGARQIECTINGIGERAGNTSLEEVVMAMKVRQDFMGVDTRINTQEIHRVSQMVSQLCNMPIQPNKAIVGSNAFAHSSGIHQDGMLKNKNTYEIMSPETIGLKKEKLNLTARSGRAAVKGHMADMGYNEQDYDLDKLYDAFLKLADKKGQVFDYDLEALAFIDMQQGDEDRLVLDKLSAHSTKEYPATAFVQLKLDGEKLSTSSIGGNGPVDAVYNAILNLTGLEIKMSHYNLTAKGEGAEALGQVDIVVEHKGRKFHGVGLATDIVESSALALVHAINAIYRAHKVADIKSHKHH.

Positions 5–267 constitute a Pyruvate carboxyltransferase domain; sequence VIIFDTTLRD…DTRINTQEIH (263 aa). Residues D14, H202, H204, and N238 each contribute to the Mn(2+) site. Residues 392–515 are regulatory domain; it reads VLDKLSAHST…VADIKSHKHH (124 aa).

The protein belongs to the alpha-IPM synthase/homocitrate synthase family. LeuA type 1 subfamily. In terms of assembly, homodimer. The cofactor is Mn(2+).

It localises to the cytoplasm. It catalyses the reaction 3-methyl-2-oxobutanoate + acetyl-CoA + H2O = (2S)-2-isopropylmalate + CoA + H(+). Its pathway is amino-acid biosynthesis; L-leucine biosynthesis; L-leucine from 3-methyl-2-oxobutanoate: step 1/4. Its function is as follows. Catalyzes the condensation of the acetyl group of acetyl-CoA with 3-methyl-2-oxobutanoate (2-ketoisovalerate) to form 3-carboxy-3-hydroxy-4-methylpentanoate (2-isopropylmalate). The protein is 2-isopropylmalate synthase of Haemophilus influenzae (strain 86-028NP).